The chain runs to 338 residues: Acyl-CoA:acyl-CoA alkyltransferase (338 aa).

Residues histidine 18 and aspartate 56 each contribute to the Mn(2+) site. The active-site Proton acceptor is glutamate 97. Cysteine 123 functions as the Acyl-thioester intermediate in the catalytic mechanism.

It belongs to the thiolase-like superfamily. OleA family. In terms of assembly, homodimer. Weakly associates with the OleBCD complex.

It is found in the cytoplasm. It catalyses the reaction a 1,2-saturated acyl-CoA + an acyl-CoA + H2O = an (R)-2-alkyl-3-oxoalkanoate + 2 CoA + H(+). With respect to regulation, inhibited by cerulenin. Functionally, involved in olefin biosynthesis. Catalyzes a non-decarboxylative head-to-head Claisen condensation of two acyl-CoA molecules, generating an (R)-2-alkyl-3-oxoalkanoate. Is active with fatty acyl-CoA substrates that ranged from C(8) to C(16) in length, and is the most active with palmitoyl-CoA and myristoyl-CoA. This chain is Acyl-CoA:acyl-CoA alkyltransferase, found in Xanthomonas campestris pv. campestris (strain ATCC 33913 / DSM 3586 / NCPPB 528 / LMG 568 / P 25).